Here is a 355-residue protein sequence, read N- to C-terminus: Heavy metal-associated isoprenylated plant protein 7 (355 aa).

The segment covering 1 to 58 (MGEEEKKPEAAEEKKMEEKKPEEKKEGEDKKVDAEKKGEDSDKKPQEGESNKDSKEDS) has biased composition (basic and acidic residues). The interval 1 to 74 (MGEEEKKPEA…APAPPPPPQE (74 aa)) is disordered. Residues 63-73 (PEAPAPPPPPQ) are compositionally biased toward pro residues. HMA domains lie at 72-136 (PQEV…HRQV) and 170-234 (VVTV…KHAA). Positions 83 and 86 each coordinate a metal cation. Positions 132–157 (THRQVQLLSPIPPPPPPPEKKAEEDK) are disordered. A metal cation-binding residues include cysteine 181 and cysteine 184. Residues 235–308 (IMKIDPPPPP…GGGEEEGKVV (74 aa)) form a disordered region. The segment covering 254–293 (EGEKKEEEKGEGESKGEEGKDDKAKTDEEKKEGDGGKGEG) has biased composition (basic and acidic residues). Cysteine 352 bears the Cysteine methyl ester mark. Cysteine 352 is lipidated: S-farnesyl cysteine. Residues 353 to 355 (TVM) constitute a propeptide, removed in mature form.

It belongs to the HIPP family. Efficiently farnesylated in vitro.

In terms of biological role, heavy-metal-binding protein. Binds zinc, copper and nickel in a reversible manner. This is Heavy metal-associated isoprenylated plant protein 7 from Arabidopsis thaliana (Mouse-ear cress).